The sequence spans 316 residues: Ribosomal protein L11 methyltransferase (316 aa).

Positions 160, 181, 203, and 246 each coordinate S-adenosyl-L-methionine.

This sequence belongs to the methyltransferase superfamily. PrmA family.

Its subcellular location is the cytoplasm. It carries out the reaction L-lysyl-[protein] + 3 S-adenosyl-L-methionine = N(6),N(6),N(6)-trimethyl-L-lysyl-[protein] + 3 S-adenosyl-L-homocysteine + 3 H(+). Its function is as follows. Methylates ribosomal protein L11. The protein is Ribosomal protein L11 methyltransferase of Heliobacterium modesticaldum (strain ATCC 51547 / Ice1).